The primary structure comprises 788 residues: E3 ubiquitin-protein ligase SspH2 (788 aa).

Residues Met1 to Phe481 form an interaction with host membrane and with target proteins region. LRR repeat units follow at residues His223 to Pro242, Glu243 to Leu264, Leu265 to Ser282, Gly283 to Pro302, Gly303 to Leu324, Cys325 to Ser342, Gly343 to Leu364, Tyr365 to Ser382, Gly383 to Leu404, Lys405 to Ser422, Gly423 to Ser445, and Ser446 to Arg466. The linker stretch occupies residues Asp482–Glu491. An E3 ubiquitin-protein ligase catalytic domain region spans residues Thr492–Asn788. In terms of domain architecture, NEL spans Ala494–Asn788. The Glycyl thioester intermediate role is filled by Cys580.

The protein belongs to the LRR-containing bacterial E3 ligase family. Post-translationally, ubiquitinated in the presence of host E1 ubiquitin-activating enzyme UBA1, E2 ubiquitin-conjugating enzyme UBE2D2 and ubiquitin.

The protein localises to the secreted. It localises to the host cytoplasm. Its subcellular location is the host apical cell membrane. The catalysed reaction is S-ubiquitinyl-[E2 ubiquitin-conjugating enzyme]-L-cysteine + [acceptor protein]-L-lysine = [E2 ubiquitin-conjugating enzyme]-L-cysteine + N(6)-ubiquitinyl-[acceptor protein]-L-lysine.. Exists in an autoinhibited state in the absence of substrate protein, due to interactions of the leucine-rich repeat domain with the catalytic domain. Is activated upon binding to a substrate protein. In terms of biological role, effector proteins function to alter host cell physiology and promote bacterial survival in host tissues. This protein is an E3 ubiquitin ligase that interferes with host's ubiquitination pathway. In Salmonella typhimurium (strain LT2 / SGSC1412 / ATCC 700720), this protein is E3 ubiquitin-protein ligase SspH2 (sspH2).